The following is a 283-amino-acid chain: MSQGYLNFPHIDPVLIEIGPLAVRWYGLMYLFGFMFALWLANKRADKPNSGWTRDQVSDLLFAGFLGVVIGGRVGYVLFYNFGYFLDNPLYLFEVWTGGMSFHGGLLGVISAMLWYGYKNNRSFFTIADFVAPLVPFGLGAGRLGNFMNGELWGRVTDVPWAMVFPTGGPFPRHPSQLYEFALEGVVLFFILNWFIRKPRPLGAVSGLFLFGYGTFRFLVEYVRQPDAQLGLFGDWISMGQILSLPMVIGGLLMMLWAFKRNLFATDVEQNKTKSKKSKQKAK.

The next 7 membrane-spanning stretches (helical) occupy residues 21–41 (LAVR…LWLA), 60–80 (LLFA…VLFY), 95–115 (VWTG…AMLW), 124–144 (FFTI…AGRL), 176–196 (SQLY…NWFI), 203–223 (GAVS…VEYV), and 239–259 (MGQI…LWAF). Arg-143 lines the a 1,2-diacyl-sn-glycero-3-phospho-(1'-sn-glycerol) pocket.

This sequence belongs to the Lgt family.

The protein localises to the cell inner membrane. The enzyme catalyses L-cysteinyl-[prolipoprotein] + a 1,2-diacyl-sn-glycero-3-phospho-(1'-sn-glycerol) = an S-1,2-diacyl-sn-glyceryl-L-cysteinyl-[prolipoprotein] + sn-glycerol 1-phosphate + H(+). Its pathway is protein modification; lipoprotein biosynthesis (diacylglyceryl transfer). Functionally, catalyzes the transfer of the diacylglyceryl group from phosphatidylglycerol to the sulfhydryl group of the N-terminal cysteine of a prolipoprotein, the first step in the formation of mature lipoproteins. In Aliivibrio fischeri (strain MJ11) (Vibrio fischeri), this protein is Phosphatidylglycerol--prolipoprotein diacylglyceryl transferase.